Here is a 149-residue protein sequence, read N- to C-terminus: L-alanine exporter AlaE (149 aa).

The next 4 helical transmembrane spans lie at 16–36, 46–66, 83–105, and 115–135; these read FAMV…LSGM, LVAI…RDLI, ADVL…TVGA, and SSNI…LDYC.

Belongs to the AlaE exporter family.

Its subcellular location is the cell inner membrane. Exports L-alanine. This Salmonella typhimurium (strain LT2 / SGSC1412 / ATCC 700720) protein is L-alanine exporter AlaE.